Here is an 838-residue protein sequence, read N- to C-terminus: Glycogen phosphorylase, brain form (838 aa).

Ala2 is modified (N-acetylalanine). Position 15 is a phosphoserine (Ser15). Asp43, Tyr197, and Arg310 together coordinate AMP. Phosphotyrosine is present on Tyr197. Tyr473 carries the phosphotyrosine modification. At Ser524 the chain carries Phosphoserine. Lys569 serves as a coordination point for pyridoxal 5'-phosphate. The segment at 677–678 (TG) is pyridoxal 5'-phosphate. Lys681 is modified (N6-(pyridoxal phosphate)lysine).

This sequence belongs to the glycogen phosphorylase family. Homodimer. Dimers associate into a tetramer to form the enzymatically active phosphorylase A. Pyridoxal 5'-phosphate is required as a cofactor. Phosphorylation of Ser-15 converts phosphorylase B (unphosphorylated) to phosphorylase A.

The enzyme catalyses [(1-&gt;4)-alpha-D-glucosyl](n) + phosphate = [(1-&gt;4)-alpha-D-glucosyl](n-1) + alpha-D-glucose 1-phosphate. Its activity is regulated as follows. Activity of phosphorylase is controlled both by allosteric means (through the non-covalent binding of metabolites) and by covalent modification. Thus AMP allosterically activates, whereas ATP, ADP, and glucose-6-phosphate allosterically inhibit, phosphorylase B. Functionally, glycogen phosphorylase that regulates glycogen mobilization. Phosphorylase is an important allosteric enzyme in carbohydrate metabolism. Enzymes from different sources differ in their regulatory mechanisms and in their natural substrates. However, all known phosphorylases share catalytic and structural properties. In Rattus norvegicus (Rat), this protein is Glycogen phosphorylase, brain form (Pygb).